The following is a 288-amino-acid chain: MKFLLAFSLLIPSVVFASSSKFQQVEQDVKAIEVSLSARIGVSVLDTQNGEYWDYNGNQRFPLTSTFKTIACAKLLYDAEQGKVNPNSTVEIKKADLVTYSPVIEKQVGQAITLDDACFATMTTSDNTAANIILSAVGGPKGVTDFLRQIGDKETRLDRIEPDLNEGKLGDLRDTTTPKAIASTLNKFLFGSALSEMNQKKLESWMVNNQVTGNLLRSVLPAGWNIADRSGAGGFGARSITAVVWSEHQAPIIVSIYLAQTQASMEERNDAIVKIGHSIFDVYTSQSR.

An N-terminal signal peptide occupies residues 1 to 17 (MKFLLAFSLLIPSVVFA). Residue Ser-65 is the Acyl-ester intermediate of the active site. The cysteines at positions 72 and 118 are disulfide-linked. 229-231 (RSG) provides a ligand contact to substrate.

It belongs to the class-A beta-lactamase family.

It catalyses the reaction a beta-lactam + H2O = a substituted beta-amino acid. Its function is as follows. Hydrolyzes both carbenicillin and oxacillin. The sequence is that of Beta-lactamase PSE-4 (pse4) from Pseudomonas aeruginosa.